We begin with the raw amino-acid sequence, 211 residues long: tRNA (guanine-N(7)-)-methyltransferase (211 aa).

Residues glutamate 44, aspartate 69, aspartate 96, and aspartate 118 each contribute to the S-adenosyl-L-methionine site. Aspartate 118 is a catalytic residue. A substrate-binding site is contributed by lysine 122. Positions 124 to 129 (KHEKRR) are interaction with RNA. Substrate is bound by residues aspartate 154 and 191 to 194 (TEYE).

This sequence belongs to the class I-like SAM-binding methyltransferase superfamily. TrmB family.

It catalyses the reaction guanosine(46) in tRNA + S-adenosyl-L-methionine = N(7)-methylguanosine(46) in tRNA + S-adenosyl-L-homocysteine. The protein operates within tRNA modification; N(7)-methylguanine-tRNA biosynthesis. Catalyzes the formation of N(7)-methylguanine at position 46 (m7G46) in tRNA. This is tRNA (guanine-N(7)-)-methyltransferase from Streptococcus pyogenes serotype M6 (strain ATCC BAA-946 / MGAS10394).